The sequence spans 560 residues: SET domain-containing protein 4 (560 aa).

2 disordered regions span residues 1–61 (MTSP…PSPQ) and 125–157 (KKQN…AEDN). Positions 26–38 (SRSSSYSSNSSMS) are enriched in low complexity. A compositionally biased stretch (polar residues) spans 47–59 (LSVSSAASETLPS). The segment covering 141 to 157 (ESSKENKITPSMRAEDN) has biased composition (basic and acidic residues). The segment at 160–210 (KNGCICGSSDSKDELFIQCNKCKTWQHKLCYAFKKSDPIKRDFVCKRCDSD) adopts a PHD-type zinc-finger fold. The 130-residue stretch at 346 to 475 (ADIEVRKSSN…KGEEISVEWQ (130 aa)) folds into the SET domain.

Belongs to the SET3 family.

In terms of biological role, putative chromatin regulator. This Saccharomyces cerevisiae (strain ATCC 204508 / S288c) (Baker's yeast) protein is SET domain-containing protein 4 (SET4).